The chain runs to 133 residues: MPSSAPSQRQLRVGEQARHALSDVLQREDMRDPALEGAVISVSEVRMSPDLKIATVFVSPLSGDKEAIIAALNRHARYIRGRVSPALRQMKYMPEFRFHLDTSYENFEKIDRILRSPEVARDLGDADDEDDNG.

This sequence belongs to the RbfA family. In terms of assembly, monomer. Binds 30S ribosomal subunits, but not 50S ribosomal subunits or 70S ribosomes.

It is found in the cytoplasm. Its function is as follows. One of several proteins that assist in the late maturation steps of the functional core of the 30S ribosomal subunit. Associates with free 30S ribosomal subunits (but not with 30S subunits that are part of 70S ribosomes or polysomes). Required for efficient processing of 16S rRNA. May interact with the 5'-terminal helix region of 16S rRNA. In Chelativorans sp. (strain BNC1), this protein is Ribosome-binding factor A.